A 332-amino-acid chain; its full sequence is 5-dehydro-2-deoxygluconokinase 2 (332 aa).

The protein belongs to the carbohydrate kinase PfkB family.

It catalyses the reaction 5-dehydro-2-deoxy-D-gluconate + ATP = 6-phospho-5-dehydro-2-deoxy-D-gluconate + ADP + H(+). It participates in polyol metabolism; myo-inositol degradation into acetyl-CoA; acetyl-CoA from myo-inositol: step 5/7. Catalyzes the phosphorylation of 5-dehydro-2-deoxy-D-gluconate (2-deoxy-5-keto-D-gluconate or DKG) to 6-phospho-5-dehydro-2-deoxy-D-gluconate (DKGP). This is 5-dehydro-2-deoxygluconokinase 2 from Bacillus cereus (strain ZK / E33L).